A 694-amino-acid polypeptide reads, in one-letter code: U-box domain-containing protein 1 (694 aa).

The U-box domain maps to asparagine 292–lysine 366. ARM repeat units follow at residues serine 392–lysine 432, methionine 435–isoleucine 474, aspartate 476–methionine 516, aspartate 519–valine 558, asparagine 560–glycine 599, serine 601–lysine 641, and leucine 646–arginine 685.

As to quaternary structure, interacts with LYK3. Binds to NORK/DMI2. Phosphorylated by LYK3 in vitro. Phosphorylated by NORK/DMI2. As to expression, present ubiquitously at very low levels during nonsymbiotic growth. Accumulates in roots and nodules during symbiotic growth with rhizobia and mycorrhiza.

The protein resides in the cell membrane. The enzyme catalyses S-ubiquitinyl-[E2 ubiquitin-conjugating enzyme]-L-cysteine + [acceptor protein]-L-lysine = [E2 ubiquitin-conjugating enzyme]-L-cysteine + N(6)-ubiquitinyl-[acceptor protein]-L-lysine.. It functions in the pathway protein modification; protein ubiquitination. In terms of biological role, exhibits U-box-dependent E3 ubiquitin ligase activity in vitro. Negatively modulates successive stages of infection and development of rhizobial (e.g. Sinorhizobium meliloti) and arbuscular mycorrhizal fungi (AM, e.g. Rhizophagus irregularis) symbioses, in an ubiquitin ligase activity-dependent manner. Negative regulator of the LYK3 signaling pathway leading to nitrogen-fixing symbiosis (e.g. infection and nodulation) by rhizobia. May be involved in the discrimination of rhizobium strains producing variant Nod factors. The chain is U-box domain-containing protein 1 from Medicago truncatula (Barrel medic).